Consider the following 339-residue polypeptide: tRNA N6-adenosine threonylcarbamoyltransferase (339 aa).

Positions 111 and 115 each coordinate Fe cation. Substrate contacts are provided by residues 134–138 (LVSGG), Asp-167, Gly-180, and Asn-272. Asp-300 serves as a coordination point for Fe cation.

The protein belongs to the KAE1 / TsaD family. It depends on Fe(2+) as a cofactor.

Its subcellular location is the cytoplasm. The enzyme catalyses L-threonylcarbamoyladenylate + adenosine(37) in tRNA = N(6)-L-threonylcarbamoyladenosine(37) in tRNA + AMP + H(+). Its function is as follows. Required for the formation of a threonylcarbamoyl group on adenosine at position 37 (t(6)A37) in tRNAs that read codons beginning with adenine. Is involved in the transfer of the threonylcarbamoyl moiety of threonylcarbamoyl-AMP (TC-AMP) to the N6 group of A37, together with TsaE and TsaB. TsaD likely plays a direct catalytic role in this reaction. This is tRNA N6-adenosine threonylcarbamoyltransferase from Vibrio vulnificus (strain YJ016).